Reading from the N-terminus, the 200-residue chain is MAKVNPRKRAAAAKDKWKLKDWYIVYAPEFFGNVEIGLTPADEPEKVKGRIIETTLRDVTGDFTKGHVKLYFRIHDVKGQNAYTKFKGHKLARSYIRSLVRRRTTRIDGIFNVTTKDGYKLRVMGMVIAIRRIQSSQERAVREVMEDLIRKKAEELTFTEFVLEAVNGKMGAELAREAKKIYPLKRAEIRKIKVLAEPEA.

The protein belongs to the eukaryotic ribosomal protein eS1 family.

This Thermococcus sibiricus (strain DSM 12597 / MM 739) protein is Small ribosomal subunit protein eS1.